Here is a 357-residue protein sequence, read N- to C-terminus: F-box only protein 25 (357 aa).

The interval methionine 1–glutamate 83 is interaction with beta-actin. Positions leucine 225–glutamine 273 constitute an F-box domain.

Part of a SCF (SKP1-cullin-F-box) protein ligase complex consisting of FBXO25, SKP1, CUL1 and RBX1. Interacts directly with SKP1 and CUL1. Interacts (via C-terminus) with beta-actin (via N-terminus). As to expression, expressed in all tissues tested, except striated muscle (at protein level). Expressed predominantly in the cerebral cortex, the hippocampus and the Purkinje cell layer of the brain. Intestine and kidney show also significant levels.

It localises to the nucleus. Its pathway is protein modification; protein ubiquitination. Its function is as follows. Substrate-recognition component of the SCF (SKP1-CUL1-F-box protein)-type E3 ubiquitin ligase complex. May play a role in accumulation of expanded polyglutamine (polyQ) protein huntingtin (HTT). This chain is F-box only protein 25 (Fbxo25), found in Mus musculus (Mouse).